A 254-amino-acid polypeptide reads, in one-letter code: Large ribosomal subunit protein uL15m (254 aa).

The N-terminal 78 residues, 1–78, are a transit peptide targeting the mitochondrion; it reads MFNILSRVCR…GSGQRRGRRI (78 aa). The tract at residues 44 to 104 is disordered; that stretch reads NYQSKKRVGR…KVGHSTGHLK (61 aa). Residues 64-79 are compositionally biased toward basic residues; sequence GRGHKGSGQRRGRRIK.

The protein belongs to the universal ribosomal protein uL15 family. Component of the mitochondrial large ribosomal subunit (mt-LSU). Mature yeast 74S mitochondrial ribosomes consist of a small (37S) and a large (54S) subunit. The 37S small subunit contains a 15S ribosomal RNA (15S mt-rRNA) and at least 32 different proteins. The 54S large subunit contains a 21S rRNA (21S mt-rRNA) and at least 45 different proteins.

It is found in the mitochondrion. In terms of biological role, component of the mitochondrial ribosome (mitoribosome), a dedicated translation machinery responsible for the synthesis of mitochondrial genome-encoded proteins, including at least some of the essential transmembrane subunits of the mitochondrial respiratory chain. The mitoribosomes are attached to the mitochondrial inner membrane and translation products are cotranslationally integrated into the membrane. This is Large ribosomal subunit protein uL15m (mrpl10) from Schizosaccharomyces pombe (strain 972 / ATCC 24843) (Fission yeast).